We begin with the raw amino-acid sequence, 312 residues long: Aspartate carbamoyltransferase catalytic subunit (312 aa).

Arginine 55 and threonine 56 together coordinate carbamoyl phosphate. Residue lysine 83 participates in L-aspartate binding. 3 residues coordinate carbamoyl phosphate: arginine 105, histidine 138, and glutamine 141. Positions 171 and 225 each coordinate L-aspartate. Residues glycine 266 and proline 267 each coordinate carbamoyl phosphate.

It belongs to the aspartate/ornithine carbamoyltransferase superfamily. ATCase family. As to quaternary structure, heterododecamer (2C3:3R2) of six catalytic PyrB chains organized as two trimers (C3), and six regulatory PyrI chains organized as three dimers (R2).

The catalysed reaction is carbamoyl phosphate + L-aspartate = N-carbamoyl-L-aspartate + phosphate + H(+). It functions in the pathway pyrimidine metabolism; UMP biosynthesis via de novo pathway; (S)-dihydroorotate from bicarbonate: step 2/3. In terms of biological role, catalyzes the condensation of carbamoyl phosphate and aspartate to form carbamoyl aspartate and inorganic phosphate, the committed step in the de novo pyrimidine nucleotide biosynthesis pathway. The chain is Aspartate carbamoyltransferase catalytic subunit from Corynebacterium glutamicum (strain ATCC 13032 / DSM 20300 / JCM 1318 / BCRC 11384 / CCUG 27702 / LMG 3730 / NBRC 12168 / NCIMB 10025 / NRRL B-2784 / 534).